Reading from the N-terminus, the 353-residue chain is Alcohol dehydrogenase 1 (353 aa).

Positions 47, 70, 101, 104, 107, 115, and 157 each coordinate Zn(2+). NAD(+) is bound by residues 181–187, Asp205, Lys210, 274–276, and Arg346; these read GAGGGLG and IGL.

This sequence belongs to the zinc-containing alcohol dehydrogenase family. In terms of assembly, homotetramer. Requires Zn(2+) as cofactor.

The protein localises to the cytoplasm. The catalysed reaction is a primary alcohol + NAD(+) = an aldehyde + NADH + H(+). The enzyme catalyses a secondary alcohol + NAD(+) = a ketone + NADH + H(+). The protein is Alcohol dehydrogenase 1 (adh-1) of Neurospora crassa (strain ATCC 24698 / 74-OR23-1A / CBS 708.71 / DSM 1257 / FGSC 987).